Consider the following 538-residue polypeptide: Phosphoenolpyruvate carboxykinase (ATP) (538 aa).

The substrate site is built by arginine 61, tyrosine 195, and lysine 201. Residues lysine 201, histidine 220, and 236-244 (GLSGTGKTT) contribute to the ATP site. The Mn(2+) site is built by lysine 201 and histidine 220. Mn(2+) is bound at residue aspartate 257. The ATP site is built by glutamate 285, arginine 323, and threonine 449. Arginine 323 is a binding site for substrate.

It belongs to the phosphoenolpyruvate carboxykinase (ATP) family. Mn(2+) is required as a cofactor.

It is found in the cytoplasm. The enzyme catalyses oxaloacetate + ATP = phosphoenolpyruvate + ADP + CO2. The protein operates within carbohydrate biosynthesis; gluconeogenesis. Functionally, involved in the gluconeogenesis. Catalyzes the conversion of oxaloacetate (OAA) to phosphoenolpyruvate (PEP) through direct phosphoryl transfer between the nucleoside triphosphate and OAA. This Bradyrhizobium diazoefficiens (strain JCM 10833 / BCRC 13528 / IAM 13628 / NBRC 14792 / USDA 110) protein is Phosphoenolpyruvate carboxykinase (ATP).